Here is a 461-residue protein sequence, read N- to C-terminus: Ribulose bisphosphate carboxylase (461 aa).

Asn-112 is a binding site for substrate. Catalysis depends on Lys-167, which acts as the Proton acceptor. Lys-169 lines the substrate pocket. Lys-192, Asp-194, and Glu-195 together coordinate Mg(2+). The residue at position 192 (Lys-192) is an N6-carboxylysine. Residue His-288 is the Proton acceptor of the active site. Substrate is bound by residues Arg-289, His-322, and Ser-369.

The protein belongs to the RuBisCO large chain family. Type II subfamily. Homodimer. It depends on Mg(2+) as a cofactor.

The enzyme catalyses 2 (2R)-3-phosphoglycerate + 2 H(+) = D-ribulose 1,5-bisphosphate + CO2 + H2O. The catalysed reaction is D-ribulose 1,5-bisphosphate + O2 = 2-phosphoglycolate + (2R)-3-phosphoglycerate + 2 H(+). Functionally, ruBisCO catalyzes two reactions: the carboxylation of D-ribulose 1,5-bisphosphate, the primary event in carbon dioxide fixation, as well as the oxidative fragmentation of the pentose substrate. Both reactions occur simultaneously and in competition at the same active site. The chain is Ribulose bisphosphate carboxylase from Rhodopseudomonas palustris (strain ATCC BAA-98 / CGA009).